The primary structure comprises 89 residues: Small ribosomal subunit protein uS15 (89 aa).

Over residues 1-10 (MSITAERKAE) the composition is skewed to basic and acidic residues. Residues 1-24 (MSITAERKAEVIQGNANKAGDTGS) form a disordered region.

This sequence belongs to the universal ribosomal protein uS15 family. In terms of assembly, part of the 30S ribosomal subunit. Forms a bridge to the 50S subunit in the 70S ribosome, contacting the 23S rRNA.

Its function is as follows. One of the primary rRNA binding proteins, it binds directly to 16S rRNA where it helps nucleate assembly of the platform of the 30S subunit by binding and bridging several RNA helices of the 16S rRNA. In terms of biological role, forms an intersubunit bridge (bridge B4) with the 23S rRNA of the 50S subunit in the ribosome. This chain is Small ribosomal subunit protein uS15, found in Rhodopseudomonas palustris (strain HaA2).